The primary structure comprises 246 residues: Adenosylcobinamide-GDP ribazoletransferase (246 aa).

6 helical membrane-spanning segments follow: residues Ile34–Leu54, Cys59–Phe79, Gly113–Leu133, Pro138–Tyr158, Leu171–Leu191, and Val194–Leu214.

This sequence belongs to the CobS family. The cofactor is Mg(2+).

The protein resides in the cell inner membrane. The enzyme catalyses alpha-ribazole + adenosylcob(III)inamide-GDP = adenosylcob(III)alamin + GMP + H(+). It catalyses the reaction alpha-ribazole 5'-phosphate + adenosylcob(III)inamide-GDP = adenosylcob(III)alamin 5'-phosphate + GMP + H(+). The protein operates within cofactor biosynthesis; adenosylcobalamin biosynthesis; adenosylcobalamin from cob(II)yrinate a,c-diamide: step 7/7. In terms of biological role, joins adenosylcobinamide-GDP and alpha-ribazole to generate adenosylcobalamin (Ado-cobalamin). Also synthesizes adenosylcobalamin 5'-phosphate from adenosylcobinamide-GDP and alpha-ribazole 5'-phosphate. This is Adenosylcobinamide-GDP ribazoletransferase from Klebsiella pneumoniae (strain 342).